A 550-amino-acid polypeptide reads, in one-letter code: Dihydroxy-acid dehydratase (550 aa).

Asp78 contacts Mg(2+). Cys119 contributes to the [2Fe-2S] cluster binding site. Positions 120 and 121 each coordinate Mg(2+). Lys121 carries the post-translational modification N6-carboxylysine. Cys191 is a [2Fe-2S] cluster binding site. Glu440 is a Mg(2+) binding site. Catalysis depends on Ser466, which acts as the Proton acceptor.

Belongs to the IlvD/Edd family. In terms of assembly, homodimer. [2Fe-2S] cluster serves as cofactor. It depends on Mg(2+) as a cofactor.

The catalysed reaction is (2R)-2,3-dihydroxy-3-methylbutanoate = 3-methyl-2-oxobutanoate + H2O. The enzyme catalyses (2R,3R)-2,3-dihydroxy-3-methylpentanoate = (S)-3-methyl-2-oxopentanoate + H2O. It functions in the pathway amino-acid biosynthesis; L-isoleucine biosynthesis; L-isoleucine from 2-oxobutanoate: step 3/4. Its pathway is amino-acid biosynthesis; L-valine biosynthesis; L-valine from pyruvate: step 3/4. Its function is as follows. Functions in the biosynthesis of branched-chain amino acids. Catalyzes the dehydration of (2R,3R)-2,3-dihydroxy-3-methylpentanoate (2,3-dihydroxy-3-methylvalerate) into 2-oxo-3-methylpentanoate (2-oxo-3-methylvalerate) and of (2R)-2,3-dihydroxy-3-methylbutanoate (2,3-dihydroxyisovalerate) into 2-oxo-3-methylbutanoate (2-oxoisovalerate), the penultimate precursor to L-isoleucine and L-valine, respectively. This chain is Dihydroxy-acid dehydratase, found in Methanococcus maripaludis (strain C7 / ATCC BAA-1331).